Here is a 172-residue protein sequence, read N- to C-terminus: Protein GrpE (172 aa).

The disordered stretch occupies residues 1 to 23 (MNQDHPECDSEELTQNSPETDPL).

Belongs to the GrpE family. In terms of assembly, homodimer.

It localises to the cytoplasm. Participates actively in the response to hyperosmotic and heat shock by preventing the aggregation of stress-denatured proteins, in association with DnaK and GrpE. It is the nucleotide exchange factor for DnaK and may function as a thermosensor. Unfolded proteins bind initially to DnaJ; upon interaction with the DnaJ-bound protein, DnaK hydrolyzes its bound ATP, resulting in the formation of a stable complex. GrpE releases ADP from DnaK; ATP binding to DnaK triggers the release of the substrate protein, thus completing the reaction cycle. Several rounds of ATP-dependent interactions between DnaJ, DnaK and GrpE are required for fully efficient folding. This is Protein GrpE from Xylella fastidiosa (strain 9a5c).